Consider the following 228-residue polypeptide: Glutamate transport system permease protein GluC (228 aa).

Transmembrane regions (helical) follow at residues 16-36, 64-84, 100-120, and 195-215; these read FWVT…LGTI, LTLV…LTLA, AVLG…RSGI, and LFVV…PMGL. The 202-residue stretch at 16–217 folds into the ABC transmembrane type-1 domain; it reads FWVTIQLTVY…ILTLPMGLGL (202 aa).

The protein belongs to the binding-protein-dependent transport system permease family. HisMQ subfamily. In terms of assembly, the complex is composed of two ATP-binding proteins (GluA), two transmembrane proteins (GluC and GluD) and a solute-binding protein (GluB).

The protein localises to the cell membrane. In terms of biological role, part of the ABC transporter complex GluABCD involved in glutamate uptake. Probably responsible for the translocation of the substrate across the membrane. The polypeptide is Glutamate transport system permease protein GluC (Corynebacterium efficiens (strain DSM 44549 / YS-314 / AJ 12310 / JCM 11189 / NBRC 100395)).